The chain runs to 299 residues: Homoserine O-acetyltransferase (299 aa).

Cys142 (acyl-thioester intermediate) is an active-site residue. Substrate contacts are provided by Lys163 and Ser192. Residue His235 is the Proton acceptor of the active site. Glu237 is a catalytic residue. Arg249 provides a ligand contact to substrate.

The protein belongs to the MetA family.

The protein resides in the cytoplasm. The enzyme catalyses L-homoserine + acetyl-CoA = O-acetyl-L-homoserine + CoA. It functions in the pathway amino-acid biosynthesis; L-methionine biosynthesis via de novo pathway; O-acetyl-L-homoserine from L-homoserine: step 1/1. Transfers an acetyl group from acetyl-CoA to L-homoserine, forming acetyl-L-homoserine. The polypeptide is Homoserine O-acetyltransferase (Synechococcus sp. (strain ATCC 27144 / PCC 6301 / SAUG 1402/1) (Anacystis nidulans)).